We begin with the raw amino-acid sequence, 227 residues long: Uracil-DNA glycosylase 2 (227 aa).

The active-site Proton acceptor is Asp-67.

This sequence belongs to the uracil-DNA glycosylase (UDG) superfamily. UNG family.

The protein localises to the cytoplasm. It catalyses the reaction Hydrolyzes single-stranded DNA or mismatched double-stranded DNA and polynucleotides, releasing free uracil.. Functionally, excises uracil residues from the DNA which can arise as a result of misincorporation of dUMP residues by DNA polymerase or due to deamination of cytosine. The sequence is that of Uracil-DNA glycosylase 2 (ung2) from Streptomyces avermitilis (strain ATCC 31267 / DSM 46492 / JCM 5070 / NBRC 14893 / NCIMB 12804 / NRRL 8165 / MA-4680).